A 305-amino-acid chain; its full sequence is Homoserine O-acetyltransferase (305 aa).

The active-site Acyl-thioester intermediate is the Cys142. The substrate site is built by Lys163 and Ser192. His235 acts as the Proton acceptor in catalysis. The active site involves Glu237. Substrate is bound at residue Arg249.

Belongs to the MetA family.

It localises to the cytoplasm. It carries out the reaction L-homoserine + acetyl-CoA = O-acetyl-L-homoserine + CoA. It functions in the pathway amino-acid biosynthesis; L-methionine biosynthesis via de novo pathway; O-acetyl-L-homoserine from L-homoserine: step 1/1. Its function is as follows. Transfers an acetyl group from acetyl-CoA to L-homoserine, forming acetyl-L-homoserine. The polypeptide is Homoserine O-acetyltransferase (Bacteroides fragilis (strain YCH46)).